Reading from the N-terminus, the 121-residue chain is Basic phospholipase A2 homolog textilotoxin B chain (121 aa).

Disulfide bonds link Cys11–Cys72, Cys27–Cys120, Cys29–Cys45, Cys44–Cys101, Cys51–Cys94, Cys61–Cys87, and Cys80–Cys92.

It belongs to the phospholipase A2 family. Group I subfamily. N49 sub-subfamily. As to quaternary structure, heterohexamer. 2 forms exist: 2 A or 2 B chains, 2 C chains and 2 covalently-linked D chains, and 1 A or 1 B, 1 C, 2 covalently-linked D chains and 2 differentially glycosylated covalently-linked D chains. Textilotoxin was originally described as pentameric. Expressed by the venom gland.

Its subcellular location is the secreted. In terms of biological role, snake venom oligomeric phospholipase A2 that has potent presynaptic neurotoxicity. Chain B is not itself neurotoxic, but it is essential for the neurotoxicity of textilotoxin. Subunit B possesses a very low phospholipase activity. This chain is Basic phospholipase A2 homolog textilotoxin B chain, found in Pseudonaja textilis (Eastern brown snake).